Reading from the N-terminus, the 534-residue chain is NAD(P)H-quinone oxidoreductase chain 4 (534 aa).

14 consecutive transmembrane segments (helical) span residues 12 to 32, 44 to 64, 96 to 116, 120 to 140, 144 to 164, 176 to 196, 220 to 240, 251 to 271, 285 to 305, 314 to 334, 340 to 360, 384 to 404, 425 to 445, and 472 to 492; these read FPWL…IPFF, FALS…INGF, MPLI…AWPV, PKLF…VFAV, LLFF…LAIW, FIIY…AMGF, ILCY…VPLH, TAPV…YALL, FAPL…LTSF, IAYS…SFSS, AMLQ…LVGA, FALW…SGFV, VVMA…LLSM, and VYII…PRLV.

The protein belongs to the complex I subunit 4 family.

The protein localises to the cellular thylakoid membrane. The catalysed reaction is a plastoquinone + NADH + (n+1) H(+)(in) = a plastoquinol + NAD(+) + n H(+)(out). It catalyses the reaction a plastoquinone + NADPH + (n+1) H(+)(in) = a plastoquinol + NADP(+) + n H(+)(out). NDH-1 shuttles electrons from NAD(P)H, via FMN and iron-sulfur (Fe-S) centers, to quinones in the respiratory chain. The immediate electron acceptor for the enzyme in this species is believed to be plastoquinone. Couples the redox reaction to proton translocation (for every two electrons transferred, four hydrogen ions are translocated across the cytoplasmic membrane), and thus conserves the redox energy in a proton gradient. The protein is NAD(P)H-quinone oxidoreductase chain 4 of Prochlorococcus marinus (strain MIT 9215).